The sequence spans 180 residues: Transcription factor HES-7.1-A (180 aa).

Residues 13-70 (HRKLLKPLVEKRRRERINNSLEKLRIFLFQTLKSEKLKNPKVEKAEILECTVQFLQSR) form the bHLH domain. The Orange domain occupies 84–116 (YQSGFQHCLETTLHFMNSKPDMNGVTKELLSHQ). Residues 176–179 (WRPW) carry the WRPW motif motif.

In terms of assembly, transcription repression requires formation of a complex with a corepressor protein of the Groucho/TLE family. Expressed in the presumptive midbrain-hindbrain boundary (MHB) as early as the early gastrula stage (stage 10.5). Expression in the MHB continues through to tailbud stage. Also transiently expressed in the eye anlage at late neurula stage.

It localises to the nucleus. Functionally, transcriptional repressor. Represses transcription from both N box- and E box-containing promoters. Demarcates the prospective midbrain-hindbrain boundary (MHB) region in the neuroectoderm in early gastrulae embryos by repressing transcription of a number of target genes. The protein is Transcription factor HES-7.1-A (hes7.1-a) of Xenopus laevis (African clawed frog).